A 119-amino-acid polypeptide reads, in one-letter code: Beta-2-microglobulin (119 aa).

Positions 1–20 are cleaved as a signal peptide; the sequence is MARSVTVIFLVLVSLAVVLA. Positions 25-114 constitute an Ig-like C1-type domain; that stretch reads PQIQVYSRHP…VTLKEPKTVT (90 aa). A disulfide bridge links Cys45 with Cys100.

The protein belongs to the beta-2-microglobulin family. In terms of assembly, heterodimer of an alpha chain and a beta chain. Beta-2-microglobulin is the beta-chain of major histocompatibility complex class I molecules. Forms a heterotrimer with MR1 and a metabolite antigen.

It is found in the secreted. Its function is as follows. Component of the class I major histocompatibility complex (MHC). Involved in the presentation of peptide antigens to the immune system. The chain is Beta-2-microglobulin (B2m) from Rattus norvegicus (Rat).